Consider the following 145-residue polypeptide: 3-dehydroquinate dehydratase (145 aa).

The active-site Proton acceptor is tyrosine 24. Residues asparagine 75, histidine 81, and aspartate 88 each coordinate substrate. Catalysis depends on histidine 101, which acts as the Proton donor. Substrate contacts are provided by residues isoleucine 102–serine 103 and arginine 112.

It belongs to the type-II 3-dehydroquinase family. In terms of assembly, homododecamer.

It catalyses the reaction 3-dehydroquinate = 3-dehydroshikimate + H2O. Its pathway is metabolic intermediate biosynthesis; chorismate biosynthesis; chorismate from D-erythrose 4-phosphate and phosphoenolpyruvate: step 3/7. Functionally, catalyzes a trans-dehydration via an enolate intermediate. This Corynebacterium glutamicum (strain R) protein is 3-dehydroquinate dehydratase.